Here is a 472-residue protein sequence, read N- to C-terminus: Ulvan lyase (472 aa).

Positions 1-21 (MIIKQYLLKISLCVLLLGCDS) are cleaved as a signal peptide. Positions 46 and 109 each coordinate substrate. Histidine 110 serves as the catalytic Proton donor. Lysine 112 and histidine 130 together coordinate substrate. Tyrosine 175 (proton acceptor) is an active-site residue. Residues arginine 191, histidine 195, and tyrosine 233 each contribute to the substrate site. Residue histidine 195 coordinates Zn(2+). 3 residues coordinate Zn(2+): histidine 251, cysteine 253, and histidine 265. Residue histidine 265 coordinates substrate.

This sequence belongs to the polysaccharide lyase 25 family.

Its function is as follows. Ulvan lyase involved in ulvan degradation. Ulvan is the main polysaccharide component of the Ulvales (green seaweed) cell wall. It is composed of disaccharide building blocks comprising 3-sulfated rhamnose (Rha3S) linked to D-glucuronic acid (GlcA), L-iduronic acid (IduA), or D-xylose (Xyl). Ulvan lyase catalyzes the endolytic cleavage of the glycosidic bond between Rha3S and the uronic acids GlcA or IduA, producing oligosaccharides that have unsaturated 4-deoxy-L-threo-hex-4-enopyranosiduronic acid (deltaUA) at the non-reducing end. This results eventually in the degradation of the ulvan polysaccharide into deltaUA-Rha3S disaccharides and deltaUA-Rha3S-Xyl-Rha3S tetrasaccharides. This is Ulvan lyase from Nonlabens ulvanivorans (Persicivirga ulvanivorans).